The chain runs to 177 residues: MLIFFKNLSMKRSTWILLFISALVLESTALYFQHGMGLNPCVMCIYERVAILGILFSGLIGCIAPKWLVLRILALLIGLGSAVKGLLLAIKHLDYQINVYPWNQCAMVPDFPQTLPLDKWFPNIFMPSGSCSDITWSFLGFSMVQWIIVIFACYFLFFIILSISQFKKVRKNRMLFR.

The Cytoplasmic segment spans residues 1–14 (MLIFFKNLSMKRST). The chain crosses the membrane as a helical span at residues 15–31 (WILLFISALVLESTALY). The Periplasmic portion of the chain corresponds to 32–49 (FQHGMGLNPCVMCIYERV). The cysteines at positions 41 and 44 are disulfide-linked. The chain crosses the membrane as a helical span at residues 50-65 (AILGILFSGLIGCIAP). Residues 66 to 72 (KWLVLRI) lie on the Cytoplasmic side of the membrane. A helical transmembrane segment spans residues 73–90 (LALLIGLGSAVKGLLLAI). The Periplasmic portion of the chain corresponds to 91-145 (KHLDYQINVYPWNQCAMVPDFPQTLPLDKWFPNIFMPSGSCSDITWSFLGFSMVQ). A disulfide bond links C105 and C131. Residues 146-164 (WIIVIFACYFLFFIILSIS) traverse the membrane as a helical segment. Residues 165-177 (QFKKVRKNRMLFR) are Cytoplasmic-facing.

Belongs to the DsbB family.

Its subcellular location is the cell inner membrane. Functionally, required for disulfide bond formation in some periplasmic proteins. Acts by oxidizing the DsbA protein. The polypeptide is Disulfide bond formation protein B (Histophilus somni (strain 129Pt) (Haemophilus somnus)).